Consider the following 507-residue polypeptide: Decapping nuclease RAI1 (507 aa).

Residue Arg-73 coordinates substrate. Glu-230 provides a ligand contact to a divalent metal cation. Positions 272 and 289 each coordinate substrate. Residues Asp-291, Glu-306, and Leu-307 each coordinate a divalent metal cation. Substrate is bound by residues Lys-308 and Gln-340.

It belongs to the DXO/Dom3Z family. Interacts with RAT1; the interaction is direct, stabilizes RAT1 protein structure and stimulates its exoribonuclease activity. The interaction also stimulates RAI1 pyrophosphohydrolase activity, probably by recruiting it to mRNA substrates. It depends on a divalent metal cation as a cofactor.

The protein localises to the nucleus. It carries out the reaction a 5'-end NAD(+)-phospho-ribonucleoside in mRNA + H2O = a 5'-end phospho-ribonucleoside in mRNA + NAD(+) + H(+). The enzyme catalyses a 5'-end (N(7)-methyl 5'-triphosphoguanosine)-ribonucleoside-ribonucleotide in mRNA + H2O = a (N(7)-methyl 5'-triphosphoguanosine)-nucleoside + a 5'-end phospho-ribonucleoside in mRNA + H(+). The catalysed reaction is a 5'-end triphospho-ribonucleoside in mRNA + H2O = a 5'-end phospho-ribonucleoside in mRNA + diphosphate + H(+). Functionally, decapping enzyme for NAD-capped RNAs: specifically hydrolyzes the nicotinamide adenine dinucleotide (NAD) cap from a subset of RNAs by removing the entire NAD moiety from the 5'-end of an NAD-capped RNA. The NAD-cap is present at the 5'-end of some RNAs and snoRNAs. In contrast to the canonical 5'-end N7 methylguanosine (m7G) cap, the NAD cap promotes mRNA decay. Also acts as a non-canonical decapping enzyme that removes the entire cap structure of m7G capped or incompletely capped RNAs. Has decapping activity toward incomplete 5'-end m7G cap mRNAs such as unmethylated 5'-end-capped RNA (cap0), while it has no activity toward 2'-O-ribose methylated m7G cap (cap1). Also possesses RNA 5'-pyrophosphohydrolase activity by hydrolyzing the 5'-end triphosphate to release pyrophosphates. Stimulates exoribonuclease activity of Rat1, allowing it to degrade RNAs with stable secondary structure more effectively. This Mycosarcoma maydis (Corn smut fungus) protein is Decapping nuclease RAI1 (RAI1).